A 599-amino-acid polypeptide reads, in one-letter code: Aspartate--tRNA(Asp/Asn) ligase (599 aa).

Glutamate 180 provides a ligand contact to L-aspartate. Residues 204–207 (QLLK) are aspartate. Arginine 226 provides a ligand contact to L-aspartate. ATP is bound by residues 226–228 (RDE) and glutamine 235. Histidine 457 serves as a coordination point for L-aspartate. Glutamate 491 provides a ligand contact to ATP. Position 498 (arginine 498) interacts with L-aspartate. 543–546 (GWDR) is a binding site for ATP. Residues 565–599 (KAGGGRDPLTGAPAPISDEQRAETGVDYDPDADEN) form a disordered region. The segment covering 590 to 599 (VDYDPDADEN) has biased composition (acidic residues).

This sequence belongs to the class-II aminoacyl-tRNA synthetase family. Type 1 subfamily. Homodimer.

It localises to the cytoplasm. It carries out the reaction tRNA(Asx) + L-aspartate + ATP = L-aspartyl-tRNA(Asx) + AMP + diphosphate. Functionally, aspartyl-tRNA synthetase with relaxed tRNA specificity since it is able to aspartylate not only its cognate tRNA(Asp) but also tRNA(Asn). Reaction proceeds in two steps: L-aspartate is first activated by ATP to form Asp-AMP and then transferred to the acceptor end of tRNA(Asp/Asn). This is Aspartate--tRNA(Asp/Asn) ligase from Bifidobacterium longum (strain NCC 2705).